Here is a 146-residue protein sequence, read N- to C-terminus: 3-hydroxyacyl-[acyl-carrier-protein] dehydratase FabZ (146 aa).

Histidine 49 is a catalytic residue.

Belongs to the thioester dehydratase family. FabZ subfamily.

The protein localises to the cytoplasm. It carries out the reaction a (3R)-hydroxyacyl-[ACP] = a (2E)-enoyl-[ACP] + H2O. In terms of biological role, involved in unsaturated fatty acids biosynthesis. Catalyzes the dehydration of short chain beta-hydroxyacyl-ACPs and long chain saturated and unsaturated beta-hydroxyacyl-ACPs. The sequence is that of 3-hydroxyacyl-[acyl-carrier-protein] dehydratase FabZ from Pseudomonas fluorescens (strain ATCC BAA-477 / NRRL B-23932 / Pf-5).